The following is a 148-amino-acid chain: Pseudoazurin (148 aa).

The N-terminal stretch at 1 to 25 is a signal peptide; that stretch reads MMIFRALIAAATLAIAIATTLPAAA. Positions 30-118 constitute a Plastocyanin-like domain; sequence VKMLNSGPGG…MGMVALVVVG (89 aa). Cu cation is bound by residues His-65, Cys-103, His-106, and Met-111.

Requires Cu cation as cofactor.

Its subcellular location is the periplasm. This is Pseudoazurin from Methylorubrum extorquens (strain ATCC 14718 / DSM 1338 / JCM 2805 / NCIMB 9133 / AM1) (Methylobacterium extorquens).